Here is a 211-residue protein sequence, read N- to C-terminus: N-(5'-phosphoribosyl)anthranilate isomerase (211 aa).

Belongs to the TrpF family.

It carries out the reaction N-(5-phospho-beta-D-ribosyl)anthranilate = 1-(2-carboxyphenylamino)-1-deoxy-D-ribulose 5-phosphate. It functions in the pathway amino-acid biosynthesis; L-tryptophan biosynthesis; L-tryptophan from chorismate: step 3/5. The protein is N-(5'-phosphoribosyl)anthranilate isomerase of Nitrosomonas europaea (strain ATCC 19718 / CIP 103999 / KCTC 2705 / NBRC 14298).